A 233-amino-acid chain; its full sequence is NAD-dependent protein deacylase (233 aa).

Residues 1–230 (MKNIMILSGA…ALDIENFMKD (230 aa)) form the Deacetylase sirtuin-type domain. Residue 9 to 28 (GAGLSAPSGLKTFRDNDGLW) coordinates NAD(+). The substrate site is built by Y53 and R56. 88 to 91 (QNVD) contributes to the NAD(+) binding site. Catalysis depends on H106, which acts as the Proton acceptor. Residues C114, C117, C133, and C136 each coordinate Zn(2+). NAD(+) contacts are provided by residues 172–174 (GTS) and I213.

The protein belongs to the sirtuin family. Class III subfamily. It depends on Zn(2+) as a cofactor.

The protein resides in the cytoplasm. It carries out the reaction N(6)-acetyl-L-lysyl-[protein] + NAD(+) + H2O = 2''-O-acetyl-ADP-D-ribose + nicotinamide + L-lysyl-[protein]. The enzyme catalyses N(6)-succinyl-L-lysyl-[protein] + NAD(+) + H2O = 2''-O-succinyl-ADP-D-ribose + nicotinamide + L-lysyl-[protein]. Its function is as follows. NAD-dependent lysine deacetylase and desuccinylase that specifically removes acetyl and succinyl groups on target proteins. Modulates the activities of several proteins which are inactive in their acylated form. This is NAD-dependent protein deacylase from Campylobacter jejuni (strain RM1221).